The primary structure comprises 310 residues: Lymphotoxin-beta (310 aa).

At 1-27 (MGALGLQGRGGRPQGTGCLLLAVAGAT) the chain is on the cytoplasmic side. Residues 28–48 (SLVTLLLAVPITVLAVLALVP) traverse the membrane as a helical; Signal-anchor for type II membrane protein segment. Topologically, residues 49 to 310 (QEQGGLVMES…LGKCLHSANV (262 aa)) are extracellular. Residues 67-86 (QGLSKSNGLPSRLHSQIPSS) are disordered. In terms of domain architecture, THD spans 138–293 (PAAHLIGAWM…GKTFFGAVMV (156 aa)). The N-linked (GlcNAc...) asparagine glycan is linked to N272.

It belongs to the tumor necrosis factor family. As to quaternary structure, heterotrimer of either two LTB and one LTA subunits or (less prevalent) two LTA and one LTB subunits.

The protein resides in the membrane. Cytokine that binds to LTBR/TNFRSF3. May play a specific role in immune response regulation. Provides the membrane anchor for the attachment of the heterotrimeric complex to the cell surface. The sequence is that of Lymphotoxin-beta (LTB) from Marmota monax (Woodchuck).